A 454-amino-acid polypeptide reads, in one-letter code: Inactive tetrahydroanabasine acetyltransferase pauper allele (454 aa).

It belongs to the plant acyltransferase family. In terms of assembly, monomer.

The polypeptide is Inactive tetrahydroanabasine acetyltransferase pauper allele (Lupinus albus (White lupine)).